The chain runs to 190 residues: Xanthine phosphoribosyltransferase (190 aa).

Leu-20 and Asn-27 together coordinate xanthine. 128 to 132 (ANGKA) provides a ligand contact to 5-phospho-alpha-D-ribose 1-diphosphate. Residue Lys-156 coordinates xanthine.

The protein belongs to the purine/pyrimidine phosphoribosyltransferase family. Xpt subfamily. Homodimer.

The protein localises to the cytoplasm. The enzyme catalyses XMP + diphosphate = xanthine + 5-phospho-alpha-D-ribose 1-diphosphate. The protein operates within purine metabolism; XMP biosynthesis via salvage pathway; XMP from xanthine: step 1/1. Its function is as follows. Converts the preformed base xanthine, a product of nucleic acid breakdown, to xanthosine 5'-monophosphate (XMP), so it can be reused for RNA or DNA synthesis. In Pseudomonas fluorescens (strain SBW25), this protein is Xanthine phosphoribosyltransferase.